The sequence spans 1385 residues: Defecation cycle abnormal dec-7 (1385 aa).

An N-terminal signal peptide occupies residues 1-19 (MWTARHAVALLVVLTYAYS). An N-linked (GlcNAc...) asparagine glycan is attached at Asn156. A disordered region spans residues 234–262 (SQTNYGAPNYQQAGAQSAANQQFSNPSQY). The segment covering 242–261 (NYQQAGAQSAANQQFSNPSQ) has biased composition (low complexity). The NIDO domain maps to 285-450 (QIYGKRKKRQ…GRWIHRVDEV (166 aa)). Asn313, Asn386, Asn413, Asn458, Asn480, Asn562, and Asn583 each carry an N-linked (GlcNAc...) asparagine glycan. An AMOP domain is found at 681 to 840 (GRNWPIDMCI…DHCEFYYWRR (160 aa)). In terms of domain architecture, VWFD spans 852–1088 (AAGYIYGEPH…FWKIDGTNDK (237 aa)). N-linked (GlcNAc...) asparagine glycosylation is found at Asn909, Asn921, Asn975, Asn1009, and Asn1124. One can recognise a Sushi domain in the interval 1179 to 1238 (ISCGPLLKKEGVVKTPPAANYLDGDKVVFSCKPKYYIHGDIERVCRNGTWSPGWWAWCRD). 2 disulfides stabilise this stretch: Cys1181/Cys1223 and Cys1209/Cys1236. Asn1225 carries N-linked (GlcNAc...) asparagine glycosylation. Residues 1251–1271 (LLSIFGISLIFVIFFCILWNI) traverse the membrane as a helical segment. The disordered stretch occupies residues 1321–1385 (MNQPSRPIPS…GNMRFETSAI (65 aa)).

In terms of tissue distribution, highly expressed in the intestinal epithelia.

It localises to the membrane. The protein localises to the cell junction. May negatively regulate activity of innexin gap junction protein inx-16, thereby mediating the rhythmic frequency of the defecation motor program. Required for the clustering of inx-16 to the cell-cell junction of the intestinal epithelia. Probably dispensable for intestinal integrity. May be a cytokine receptor. The polypeptide is Defecation cycle abnormal dec-7 (Caenorhabditis elegans).